Here is a 458-residue protein sequence, read N- to C-terminus: MKIYNTLSGKLEEFVPLEDGKVKMYVCGITPQSEPHIGHAMSYINFDVIRRYLSYKGYRVKYIQNFTDIDDKIIAKANAQGIEPSTLAERNIGVFLDAMAALNITPADYYPRATQEVPKIIEMVSGLIEKGYAYEAGGSVYLRVQKVEGYGKLSHRTLEQMMAGARIEPGEEKEYPMDFALWKATKPGEPSWESPWGLGRPGWHIECSAMSLRYLGEQIDIHGGGQDLIFPHHENEIAQSECFSGVKPFVKYWLHNGLLKLGEEKMSKSLGNLVTIKEALSRYSADALRIFVLSSSYRNPLTYSEEALEAAEKGAERLRQTAARQDNPRLQEINVDVKTYRERFTQYMDNDFNTSAALATIFDLGRELNRIEAEGGKSTQGQELFKELAGILGLSLIIAEPTTSADAAPFIDMLIELRKDLRLAKQYQLADKIRTSLDAAGILLEDSAGGTIWKIKTK.

Cys-27 is a Zn(2+) binding site. A 'HIGH' region motif is present at residues Ile-29–His-39. Residues Cys-207, His-232, and Glu-236 each contribute to the Zn(2+) site. The 'KMSKS' region motif lies at Lys-265–Ser-269. Lys-268 provides a ligand contact to ATP.

The protein belongs to the class-I aminoacyl-tRNA synthetase family. In terms of assembly, monomer. Zn(2+) serves as cofactor.

It localises to the cytoplasm. The enzyme catalyses tRNA(Cys) + L-cysteine + ATP = L-cysteinyl-tRNA(Cys) + AMP + diphosphate. This is Cysteine--tRNA ligase from Dehalococcoides mccartyi (strain ATCC BAA-2266 / KCTC 15142 / 195) (Dehalococcoides ethenogenes (strain 195)).